We begin with the raw amino-acid sequence, 85 residues long: Large ribosomal subunit protein bL27 (85 aa).

The interval 1-20 (MAHKKAGGSTRNGRDSEAKR) is disordered.

This sequence belongs to the bacterial ribosomal protein bL27 family.

This chain is Large ribosomal subunit protein bL27, found in Enterobacter sp. (strain 638).